The following is a 396-amino-acid chain: 3-hydroxykynurenine transaminase (396 aa).

Positions Ser-43–Asn-44 are binds to and confers specificity for 3-hydroxykynurenine; shared with dimeric partner. Pyridoxal 5'-phosphate contacts are provided by residues Ser-77–His-79, Ser-154, and Gln-204. Ser-154 contributes to the substrate binding site. Lys-205 is modified (N6-(pyridoxal phosphate)lysine). Residues Tyr-256 and Thr-259 each coordinate pyridoxal 5'-phosphate. Residue Arg-356 participates in substrate binding.

Belongs to the class-V pyridoxal-phosphate-dependent aminotransferase family. In terms of assembly, homodimer. Requires pyridoxal 5'-phosphate as cofactor. In terms of tissue distribution, expressed in gut and ovaries.

The protein localises to the peroxisome. The enzyme catalyses L-kynurenine + glyoxylate = kynurenate + glycine + H2O. It carries out the reaction 3-hydroxy-L-kynurenine + glyoxylate = xanthurenate + glycine + H2O. It catalyses the reaction 3-hydroxy-L-kynurenine + pyruvate = xanthurenate + L-alanine + H2O. The catalysed reaction is glyoxylate + L-alanine = glycine + pyruvate. It participates in amino-acid degradation; L-kynurenine degradation; kynurenate from L-kynurenine: step 1/2. Its function is as follows. Catalyzes the pyridoxal 5'-phosphate-dependent transamination of both 3-hydroxykynurenine and L-kynurenine to xanthurenic acid and kynurenic acid, respectively, preferentially using the alpha-ketoacid glyoxylate as the amino group acceptor. Although glyoxylate is the preferred amino group acceptor, transamination of 3-hydroxykynurenine also works with pyruvate as the amino acceptor in vitro. Involved in the detoxification of cytotoxic metabolite 3-hydroxykynurenine generated by the hydroxylation of L-kynurenine, an intermediate in the tryptophan catabolism pathway. The Plasmodium parasite uses xanthurenic acid produced in the midgut to activate its gametocytes ingested during a blood meal. Also catalyzes, although with a lesser efficiency, the transamination of alanine with glyoxylate as an amino group acceptor. May play a role in the detoxification of glyoxylate, a toxic plant metabolite from the diet. The protein is 3-hydroxykynurenine transaminase of Anopheles gambiae (African malaria mosquito).